The sequence spans 297 residues: Formamidopyrimidine-DNA glycosylase (297 aa).

Proline 2 acts as the Schiff-base intermediate with DNA in catalysis. The active-site Proton donor is the glutamate 3. Catalysis depends on lysine 58, which acts as the Proton donor; for beta-elimination activity. DNA-binding residues include histidine 106, arginine 125, and arginine 168. The FPG-type zinc finger occupies 259 to 295 (RVYDREGLACTARGCRGVVRRVVQSGRSTFFCEVCQP). Arginine 285 serves as the catalytic Proton donor; for delta-elimination activity.

Belongs to the FPG family. Monomer. The cofactor is Zn(2+).

The enzyme catalyses Hydrolysis of DNA containing ring-opened 7-methylguanine residues, releasing 2,6-diamino-4-hydroxy-5-(N-methyl)formamidopyrimidine.. It catalyses the reaction 2'-deoxyribonucleotide-(2'-deoxyribose 5'-phosphate)-2'-deoxyribonucleotide-DNA = a 3'-end 2'-deoxyribonucleotide-(2,3-dehydro-2,3-deoxyribose 5'-phosphate)-DNA + a 5'-end 5'-phospho-2'-deoxyribonucleoside-DNA + H(+). Its function is as follows. Involved in base excision repair of DNA damaged by oxidation or by mutagenic agents. Acts as a DNA glycosylase that recognizes and removes damaged bases. Has a preference for oxidized purines, such as 7,8-dihydro-8-oxoguanine (8-oxoG). Has AP (apurinic/apyrimidinic) lyase activity and introduces nicks in the DNA strand. Cleaves the DNA backbone by beta-delta elimination to generate a single-strand break at the site of the removed base with both 3'- and 5'-phosphates. This Methylobacterium nodulans (strain LMG 21967 / CNCM I-2342 / ORS 2060) protein is Formamidopyrimidine-DNA glycosylase.